The primary structure comprises 539 residues: Phosphoenolpyruvate carboxykinase (ATP) (539 aa).

Substrate-binding residues include Arg64, Tyr206, and Lys212. Residues Lys212, His231, and Gly247 to Thr255 each bind ATP. Positions 212 and 231 each coordinate Mn(2+). Asp268 serves as a coordination point for Mn(2+). Residues Glu296, Arg332, Arg448 to Ile449, and Thr454 each bind ATP. Arg332 contributes to the substrate binding site.

This sequence belongs to the phosphoenolpyruvate carboxykinase (ATP) family. As to quaternary structure, monomer. Requires Mn(2+) as cofactor.

It localises to the cytoplasm. It catalyses the reaction oxaloacetate + ATP = phosphoenolpyruvate + ADP + CO2. Its pathway is carbohydrate biosynthesis; gluconeogenesis. Functionally, involved in the gluconeogenesis. Catalyzes the conversion of oxaloacetate (OAA) to phosphoenolpyruvate (PEP) through direct phosphoryl transfer between the nucleoside triphosphate and OAA. In Salmonella choleraesuis (strain SC-B67), this protein is Phosphoenolpyruvate carboxykinase (ATP).